We begin with the raw amino-acid sequence, 269 residues long: Tryptophan synthase alpha chain (269 aa).

Catalysis depends on proton acceptor residues glutamate 50 and aspartate 61.

Belongs to the TrpA family. Tetramer of two alpha and two beta chains.

It carries out the reaction (1S,2R)-1-C-(indol-3-yl)glycerol 3-phosphate + L-serine = D-glyceraldehyde 3-phosphate + L-tryptophan + H2O. It functions in the pathway amino-acid biosynthesis; L-tryptophan biosynthesis; L-tryptophan from chorismate: step 5/5. In terms of biological role, the alpha subunit is responsible for the aldol cleavage of indoleglycerol phosphate to indole and glyceraldehyde 3-phosphate. This chain is Tryptophan synthase alpha chain, found in Francisella tularensis subsp. tularensis (strain WY96-3418).